Reading from the N-terminus, the 67-residue chain is Mu-conotoxin TsIIIA (67 aa).

A signal peptide spans methionine 1–alanine 20. The propeptide occupies valine 21–arginine 48. 3 disulfides stabilise this stretch: cysteine 50-cysteine 59, cysteine 51-cysteine 64, and cysteine 55-cysteine 65.

This sequence belongs to the conotoxin M superfamily. Expressed by the venom duct.

Its subcellular location is the secreted. In terms of biological role, mu-conotoxins block voltage-gated sodium channels (Nav). This toxin specifically inhibits mammalian Nav1.8/SCN10A sodium currents (IC(50)=2.11 uM) without inducing a shift in the current-voltage relationship of this channel. In vivo, shows potent analgesic activity in a mice hotplate analgesic assay. In addition, this toxin has better analgesic effects than Ziconotide, an analgesic drug. In Conus tessulatus (Tessellate cone), this protein is Mu-conotoxin TsIIIA.